Here is a 337-residue protein sequence, read N- to C-terminus: MKTLCTHSLPKEKMPYLLRSGEGERYLFGRQVATVMANGRSTGDLFEIVLLSGGKGDAFPLHVHKDTHEGILVLDGKLELTLDGERYLLISGDYANIPAGTPHSYRMQSHRTRLVSYTMKGNVAHLYSVIGNPYDHAEHPPYASEEVSNERFAEAAAVADIVFLDEAKPACSAKLAELTELPDGAVPYVLESGEGDRLLTGDQLHRIVAAQKNTDGQFIVVSSEGPKGDRIVDHYHEYHTETFYCLEGQMTMWTDGQEIQLNPGDFLHVPANTVHSYRLDSHYTKMVGVLVPGLFEPFFRTLGDPYEGHIFPCEPQALRFDRILQNIEALDLKVMKP.

2 Cupin type-2 domains span residues lysine 55–histidine 110 and proline 226–serine 281. Positions 62, 64, 69, 103, 234, 236, 241, and 275 each coordinate Fe cation.

As to quaternary structure, homodimer. The cofactor is Fe(2+).

It catalyses the reaction quercetin + O2 = 2-(3,4-dihydroxybenzoyloxy)-4,6-dihydroxybenzoate + CO. Its pathway is flavonoid metabolism; quercetin degradation. Functionally, performs the first step in the degradation of the flavonoid quercetin by a dioxygenase reaction. The enzyme catalyzes the cleavage of the O-heteroaromatic ring of the flavonol quercetin yielding the depside 2-protocatechuoyl-phloroglucinol carboxylic acid and carbon monoxide. This involves the remarkable dioxygenolytic cleavage of two carbon-carbon bonds. This chain is Quercetin 2,3-dioxygenase (qdoI), found in Bacillus subtilis (strain 168).